The following is an 895-amino-acid chain: Stonin-2 (895 aa).

Disordered regions lie at residues 10 to 101 (THQS…AISN), 144 to 204 (ASES…METI), and 236 to 279 (NEVG…PKST). Basic and acidic residues predominate over residues 64–73 (SHSEQDDSSE). Polar residues-rich tracts occupy residues 145 to 169 (SESS…TDLQ) and 179 to 193 (GRAS…SSSL). Ser-278, Ser-284, and Ser-299 each carry phosphoserine. Disordered regions lie at residues 291–326 (ISSL…SPIN) and 386–424 (QIDD…PRDG). 2 consecutive short sequence motifs (NPF) follow at residues 310–312 (NPF) and 326–328 (NPF). A compositionally biased stretch (polar residues) spans 311-323 (PFLNESLQDIQPS). One can recognise an SHD domain in the interval 424-557 (GWPMMLRIPE…DLPVQSMDLS (134 aa)). In terms of domain architecture, MHD spans 565–872 (EEEITVDIRD…AHYSYKVEIE (308 aa)). Ser-759 is modified (phosphoserine).

This sequence belongs to the Stoned B family. In terms of assembly, interacts with the second C2 domain of synaptotagmins SYT1 and SYT2. Interacts with EPS15, EPS15R and ITSN1. Interacts indirectly with the AP-2 adapter complex. Interacts with TOR1A and COPS4; the interaction controls STON2 protein stability. Post-translationally, phosphorylated in vitro by PKD. In terms of processing, neddylated and ubiquitinated; leading to its degradation and inhibited by TOR1A and COPS4.

It is found in the synapse. Its subcellular location is the synaptosome. It localises to the cytoplasm. The protein resides in the membrane. Functionally, adapter protein involved in endocytic machinery. Involved in the synaptic vesicle recycling. May facilitate clathrin-coated vesicle uncoating. The polypeptide is Stonin-2 (Ston2) (Rattus norvegicus (Rat)).